The sequence spans 250 residues: Methylthioribulose-1-phosphate dehydratase (250 aa).

Zn(2+) is bound by residues H103 and H105.

This sequence belongs to the aldolase class II family. MtnB subfamily. Requires Zn(2+) as cofactor.

It carries out the reaction 5-(methylsulfanyl)-D-ribulose 1-phosphate = 5-methylsulfanyl-2,3-dioxopentyl phosphate + H2O. It functions in the pathway amino-acid biosynthesis; L-methionine biosynthesis via salvage pathway; L-methionine from S-methyl-5-thio-alpha-D-ribose 1-phosphate: step 2/6. Catalyzes the dehydration of methylthioribulose-1-phosphate (MTRu-1-P) into 2,3-diketo-5-methylthiopentyl-1-phosphate (DK-MTP-1-P). This is Methylthioribulose-1-phosphate dehydratase from Leptospira borgpetersenii serovar Hardjo-bovis (strain JB197).